An 834-amino-acid polypeptide reads, in one-letter code: Kinesin-like protein KIF18B (834 aa).

The Kinesin motor domain maps to 9 to 353; sequence VVRVVVRVRP…LKYADRAKEI (345 aa). 111 to 118 serves as a coordination point for ATP; that stretch reads GATGAGKT. Residues 368–404 are a coiled coil; the sequence is ISQYATICQQLQAEVAFLREKLQMYEAGAQALQQQCS. Disordered stretches follow at residues 400 to 508, 602 to 642, 655 to 686, and 800 to 834; these read QQQC…ADHS, LGAP…NLEM, RGSL…RVCP, and KKPN…TESY. Over residues 411-432 the composition is skewed to low complexity; the sequence is SIPQSLSSSSLQPGPSSQSSTL. A Phosphothreonine modification is found at Thr-431. The segment covering 462–474 has biased composition (polar residues); the sequence is EQEQCPQDKQCPT. Phosphoserine is present on Ser-484. Over residues 611 to 620 the composition is skewed to basic and acidic residues; the sequence is TSDKTFQKPT. A Nuclear localization signal motif is present at residues 619–627; sequence PTKEKKRKL. Phosphoserine is present on residues Ser-634 and Ser-657. At Thr-669 the chain carries Phosphothreonine. Ser-814 is modified (phosphoserine).

Belongs to the TRAFAC class myosin-kinesin ATPase superfamily. Kinesin family. In terms of assembly, interacts with MAPRE1; this interaction is required for efficient accumulation at microtubule plus ends. Interacts with KIF2C at microtubule tips; this interaction increases the affinity of both partners for microtubule plus ends and is required for robust microtubule depolymerization. KIF2C phosphorylation by AURKA or AURKB strongly reduces KIF18B-binding.

Its subcellular location is the nucleus. The protein resides in the cytoplasm. The protein localises to the cytoskeleton. In terms of biological role, in complex with KIF2C, constitutes the major microtubule plus-end depolymerizing activity in mitotic cells. Its major role may be to transport KIF2C and/or MAPRE1 along microtubules. This chain is Kinesin-like protein KIF18B (Kif18b), found in Mus musculus (Mouse).